The chain runs to 168 residues: Transmembrane protein 31 (168 aa).

Basic and acidic residues predominate over residues 1–11 (MRLTEKSEGEQ). The segment at 1–63 (MRLTEKSEGE…LPSRRTPTTS (63 aa)) is disordered. Composition is skewed to polar residues over residues 13-22 (LKPNNSNAPN) and 35-48 (HTPARQRTQRADTQ). The segment covering 49–63 (PSRCRLPSRRTPTTS) has biased composition (low complexity). Helical transmembrane passes span 119 to 139 (IGLPIILHLFALSTLYFYKFF) and 148 to 168 (FFILLVLLLLLFIIVFILIFF).

The protein localises to the membrane. This Homo sapiens (Human) protein is Transmembrane protein 31 (TMEM31).